The sequence spans 84 residues: U4-theraphotoxin-Hhn1a (84 aa).

The first 22 residues, 1–22 (MKVTLIAILTRAAVLVLHTTAA), serve as a signal peptide directing secretion. A propeptide spanning residues 23-47 (EELEESQLMEVSMPDTELAAVDEER) is cleaved from the precursor. Disulfide bonds link C51–C65, C55–C76, and C70–C81.

Belongs to the neurotoxin 12 (Hwtx-2) family. 02 (Hwtx-2) subfamily. In terms of tissue distribution, expressed by the venom gland.

Its subcellular location is the secreted. Its function is as follows. Postsynaptic neurotoxin. This Cyriopagopus hainanus (Chinese bird spider) protein is U4-theraphotoxin-Hhn1a.